Here is a 231-residue protein sequence, read N- to C-terminus: 2-C-methyl-D-erythritol 4-phosphate cytidylyltransferase (231 aa).

This sequence belongs to the IspD/TarI cytidylyltransferase family. IspD subfamily.

It catalyses the reaction 2-C-methyl-D-erythritol 4-phosphate + CTP + H(+) = 4-CDP-2-C-methyl-D-erythritol + diphosphate. It functions in the pathway isoprenoid biosynthesis; isopentenyl diphosphate biosynthesis via DXP pathway; isopentenyl diphosphate from 1-deoxy-D-xylulose 5-phosphate: step 2/6. Functionally, catalyzes the formation of 4-diphosphocytidyl-2-C-methyl-D-erythritol from CTP and 2-C-methyl-D-erythritol 4-phosphate (MEP). In Xylella fastidiosa (strain 9a5c), this protein is 2-C-methyl-D-erythritol 4-phosphate cytidylyltransferase.